A 508-amino-acid chain; its full sequence is Photosystem II CP47 reaction center protein (508 aa).

Transmembrane regions (helical) follow at residues 21-36 (AVHI…WAGS), 101-115 (IVFS…IWHW), 140-156 (GIHL…FGAF), 203-218 (IAAG…FHLS), 237-252 (VLSS…AFVV), and 457-472 (SFAL…HGAR).

This sequence belongs to the PsbB/PsbC family. PsbB subfamily. PSII is composed of 1 copy each of membrane proteins PsbA, PsbB, PsbC, PsbD, PsbE, PsbF, PsbH, PsbI, PsbJ, PsbK, PsbL, PsbM, PsbT, PsbX, PsbY, PsbZ, Psb30/Ycf12, at least 3 peripheral proteins of the oxygen-evolving complex and a large number of cofactors. It forms dimeric complexes. Binds multiple chlorophylls. PSII binds additional chlorophylls, carotenoids and specific lipids. is required as a cofactor.

Its subcellular location is the plastid. It is found in the chloroplast thylakoid membrane. In terms of biological role, one of the components of the core complex of photosystem II (PSII). It binds chlorophyll and helps catalyze the primary light-induced photochemical processes of PSII. PSII is a light-driven water:plastoquinone oxidoreductase, using light energy to abstract electrons from H(2)O, generating O(2) and a proton gradient subsequently used for ATP formation. The protein is Photosystem II CP47 reaction center protein of Daucus carota (Wild carrot).